The sequence spans 139 residues: Small ribosomal subunit protein uS12 (139 aa).

Residues 1–21 (MSTVSQLIKKRRSSKTSKTKA) form a disordered region. Residues 8 to 18 (IKKRRSSKTSK) show a composition bias toward basic residues. Asp102 bears the 3-methylthioaspartic acid mark.

Belongs to the universal ribosomal protein uS12 family. As to quaternary structure, part of the 30S ribosomal subunit. Contacts proteins S8 and S17. May interact with IF1 in the 30S initiation complex.

In terms of biological role, with S4 and S5 plays an important role in translational accuracy. Its function is as follows. Interacts with and stabilizes bases of the 16S rRNA that are involved in tRNA selection in the A site and with the mRNA backbone. Located at the interface of the 30S and 50S subunits, it traverses the body of the 30S subunit contacting proteins on the other side and probably holding the rRNA structure together. The combined cluster of proteins S8, S12 and S17 appears to hold together the shoulder and platform of the 30S subunit. This is Small ribosomal subunit protein uS12 from Aster yellows witches'-broom phytoplasma (strain AYWB).